The chain runs to 437 residues: GTPase Der (437 aa).

EngA-type G domains follow at residues 4-168 (PVVA…PAED) and 177-352 (IRVS…QAHS). Residues 10–17 (GRPNVGKS), 57–61 (DTGGI), 120–123 (NKAD), 183–190 (GRPNVGKS), 230–234 (DTAGM), and 295–298 (NKWD) each bind GTP. The region spanning 353-437 (MRIPTAVLND…PVRIWTRKKT (85 aa)) is the KH-like domain.

This sequence belongs to the TRAFAC class TrmE-Era-EngA-EngB-Septin-like GTPase superfamily. EngA (Der) GTPase family. Associates with the 50S ribosomal subunit.

GTPase that plays an essential role in the late steps of ribosome biogenesis. The sequence is that of GTPase Der from Brevibacillus brevis (strain 47 / JCM 6285 / NBRC 100599).